The chain runs to 266 residues: MKAVVLTLAVLFLTGSQARHFWQQDEPQSPWDRVKDLATVYVDVVKDGGRDYVAQFEASALGKQLNLKLLDNWDSLSSTVAKLREQIGPVTQEFWDNLEKETEVLRQEMSKDLEEVKKKVQPYLDEFQSKWHEEVELYRQKVAPLGAELREGARQKLQELQEKLSPLAEELRDRARAHVDALRAQLAPYSEQLRERLAARLQALKEGGGAALTEYHAKASEHLSALREKAKPALEDLRQGLLPVLENFRVSLLAAVDEATKKLNSQ.

The N-terminal stretch at 1 to 18 (MKAVVLTLAVLFLTGSQA) is a signal peptide. Tandem repeats lie at residues 67–88 (LKLL…EQIG) and 89–110 (PVTQ…QEMS). The segment at 67–266 (LKLLDNWDSL…DEATKKLNSQ (200 aa)) is 10 X approximate tandem repeats. Met109 carries the methionine sulfoxide modification. Residues 111 to 121 (KDLEEVKKKVQ) form a 3; half-length repeat. 5 consecutive repeat copies span residues 122-143 (PYLD…QKVA), 144-165 (PLGA…EKLS), 166-187 (PLAE…AQLA), 188-209 (PYSE…EGGG), and 210-231 (AALT…EKAK). A 9; half-length repeat occupies 232–242 (PALEDLRQGLL). Repeat unit 10 spans residues 243 to 266 (PVLENFRVSLLAAVDEATKKLNSQ).

Belongs to the apolipoprotein A1/A4/E family. As to quaternary structure, homodimer. Interacts with APOA1BP and CLU. Component of a sperm activating protein complex (SPAP), consisting of APOA1, an immunoglobulin heavy chain, an immunoglobulin light chain and albumin. Interacts with NDRG1. Interacts with SCGB3A2. Interacts with NAXE and YJEFN3. Glycosylated. Post-translationally, palmitoylated. In terms of processing, phosphorylation sites are present in the extracellular medium.

The protein localises to the secreted. Functionally, participates in the reverse transport of cholesterol from tissues to the liver for excretion by promoting cholesterol efflux from tissues and by acting as a cofactor for the lecithin cholesterol acyltransferase (LCAT). As part of the SPAP complex, activates spermatozoa motility. The polypeptide is Apolipoprotein A-I (APOA1) (Mirounga angustirostris (Northern elephant seal)).